The sequence spans 90 residues: MTWKLFICFLSFGVIFLRVSSLTEKSHTTSYTILHNNNFYSNSCSADTYVPSIKTFSSVWAILNVIIFFCASLFYLRHLCIVKFISNLTK.

The first 21 residues, 1-21 (MTWKLFICFLSFGVIFLRVSS), serve as a signal peptide directing secretion. The Virion surface portion of the chain corresponds to 22–55 (LTEKSHTTSYTILHNNNFYSNSCSADTYVPSIKT). Residues 56–76 (FSSVWAILNVIIFFCASLFYL) traverse the membrane as a helical segment. The Intravirion segment spans residues 77-90 (RHLCIVKFISNLTK).

This sequence belongs to the herpesviridae glycoprotein N family. In terms of assembly, interacts (via N-terminus) with gM (via N-terminus). The gM-gN heterodimer forms the gCII complex.

It is found in the virion membrane. It localises to the host membrane. The protein localises to the host Golgi apparatus. The protein resides in the host trans-Golgi network. In terms of biological role, envelope glycoprotein necessary for proper maturation of gM and modulation of its membrane fusion activity. Also plays a critical role in virion morphogenesis. The protein is Envelope glycoprotein N of Saimiriine herpesvirus 2 (strain 11) (SaHV-2).